We begin with the raw amino-acid sequence, 38 residues long: uncharacterized protein (38 aa).

This is an uncharacterized protein from Haemophilus influenzae (strain ATCC 51907 / DSM 11121 / KW20 / Rd).